Consider the following 404-residue polypeptide: Phosphopentomutase (404 aa).

Mn(2+) is bound by residues aspartate 10, aspartate 297, histidine 302, aspartate 338, histidine 339, and histidine 350.

It belongs to the phosphopentomutase family. Mn(2+) serves as cofactor.

The protein localises to the cytoplasm. It carries out the reaction 2-deoxy-alpha-D-ribose 1-phosphate = 2-deoxy-D-ribose 5-phosphate. The catalysed reaction is alpha-D-ribose 1-phosphate = D-ribose 5-phosphate. The protein operates within carbohydrate degradation; 2-deoxy-D-ribose 1-phosphate degradation; D-glyceraldehyde 3-phosphate and acetaldehyde from 2-deoxy-alpha-D-ribose 1-phosphate: step 1/2. Isomerase that catalyzes the conversion of deoxy-ribose 1-phosphate (dRib-1-P) and ribose 1-phosphate (Rib-1-P) to deoxy-ribose 5-phosphate (dRib-5-P) and ribose 5-phosphate (Rib-5-P), respectively. The protein is Phosphopentomutase of Colwellia psychrerythraea (strain 34H / ATCC BAA-681) (Vibrio psychroerythus).